Here is a 369-residue protein sequence, read N- to C-terminus: sn-glycerol-3-phosphate import ATP-binding protein UgpC 1 (369 aa).

Residues 4–234 (ISIRGVKKNY…PVSRFVAGFV (231 aa)) enclose the ABC transporter domain. 36–43 (GPSGCGKS) is a binding site for ATP.

This sequence belongs to the ABC transporter superfamily. sn-glycerol-3-phosphate importer (TC 3.A.1.1.3) family. In terms of assembly, the complex is composed of two ATP-binding proteins (UgpC), two transmembrane proteins (UgpA and UgpE) and a solute-binding protein (UgpB).

Its subcellular location is the cell inner membrane. The catalysed reaction is sn-glycerol 3-phosphate(out) + ATP + H2O = sn-glycerol 3-phosphate(in) + ADP + phosphate + H(+). Its function is as follows. Part of the ABC transporter complex UgpBAEC involved in sn-glycerol-3-phosphate (G3P) import. Responsible for energy coupling to the transport system. The protein is sn-glycerol-3-phosphate import ATP-binding protein UgpC 1 of Rhizobium johnstonii (strain DSM 114642 / LMG 32736 / 3841) (Rhizobium leguminosarum bv. viciae).